We begin with the raw amino-acid sequence, 1070 residues long: Phosphatidylinositol 4,5-bisphosphate 3-kinase catalytic subunit beta isoform (1070 aa).

Positions 26-115 (SDGSISVDFL…LPVLKLVTRS (90 aa)) constitute a PI3K-ABD domain. The region spanning 194–285 (GGKLVVAVHF…RTLPHFILVE (92 aa)) is the PI3K-RBD domain. At Ser324 the chain carries Phosphoserine. Positions 327-496 (WGNNNPFQIV…NATALHIKFP (170 aa)) constitute a C2 PI3K-type domain. A Nuclear localization signal (NLS) motif is present at residues 410–418 (KVKTKKSTK). Residues 524 to 701 (ANVSSRGGKK…GVILEAYCRG (178 aa)) enclose the PIK helical domain. A PI3K/PI4K catalytic domain is found at 772–1053 (YVEKCRYMDS…KFDEALRESW (282 aa)). A G-loop region spans residues 778 to 784 (YMDSKMK). Residues 916–924 (GIGDRHSDN) are catalytic loop. The interval 935–961 (HIDFGHILGNFKSKFGIKRERVPFILT) is activation loop. The residue at position 1070 (Ser1070) is a Phosphoserine; by autocatalysis.

The protein belongs to the PI3/PI4-kinase family. As to quaternary structure, heterodimer of a catalytic subunit PIK3CB and a p85 regulatory subunit (PIK3R1, PIK3R2 or PIK3R3). Interaction with PIK3R2 is required for nuclear localization and nuclear export. Part of a complex with PIK3R1 and PTEN. Binding to PTEN may antagonize the lipid kinase activity under normal growth conditions. Part of a complex involved in autophagosome formation composed of PIK3C3 and PIK3R4. Interacts with BECN1, ATG14 and RAB5A. Post-translationally, autophosphorylation at Ser-1070 negatively regulates the phosphatidylinositol-4,5-bisphosphate 3-kinase activity.

The protein localises to the cytoplasm. Its subcellular location is the nucleus. It catalyses the reaction a 1,2-diacyl-sn-glycero-3-phospho-(1D-myo-inositol-4,5-bisphosphate) + ATP = a 1,2-diacyl-sn-glycero-3-phospho-(1D-myo-inositol-3,4,5-trisphosphate) + ADP + H(+). The enzyme catalyses 1-octadecanoyl-2-(5Z,8Z,11Z,14Z)-eicosatetraenoyl-sn-glycero-3-phospho-1D-myo-inositol 4,5-bisphosphate + ATP = 1-octadecanoyl-2-(5Z,8Z,11Z,14Z-eicosatetraenoyl)-sn-glycero-3-phospho-(1D-myo-inositol 3,4,5-triphosphate) + ADP + H(+). It carries out the reaction L-seryl-[protein] + ATP = O-phospho-L-seryl-[protein] + ADP + H(+). It participates in phospholipid metabolism; phosphatidylinositol phosphate biosynthesis. In terms of biological role, phosphoinositide-3-kinase (PI3K) phosphorylates phosphatidylinositol (PI) derivatives at position 3 of the inositol ring to produce 3-phosphoinositides. Uses ATP and PtdIns(4,5)P2 (phosphatidylinositol 4,5-bisphosphate) to generate phosphatidylinositol 3,4,5-trisphosphate (PIP3). PIP3 plays a key role by recruiting PH domain-containing proteins to the membrane, including AKT1 and PDPK1, activating signaling cascades involved in cell growth, survival, proliferation, motility and morphology. Involved in the activation of AKT1 upon stimulation by G-protein coupled receptors (GPCRs) ligands such as CXCL12, sphingosine 1-phosphate, and lysophosphatidic acid. May also act downstream receptor tyrosine kinases. Required in different signaling pathways for stable platelet adhesion and aggregation. Plays a role in platelet activation signaling triggered by GPCRs, alpha-IIb/beta-3 integrins (ITGA2B/ ITGB3) and ITAM (immunoreceptor tyrosine-based activation motif)-bearing receptors such as GP6. Regulates the strength of adhesion of ITGA2B/ ITGB3 activated receptors necessary for the cellular transmission of contractile forces. Required for platelet aggregation induced by F2 (thrombin) and thromboxane A2 (TXA2). Has a role in cell survival. May have a role in cell migration. Involved in the early stage of autophagosome formation. Modulates the intracellular level of PtdIns3P (phosphatidylinositol 3-phosphate) and activates PIK3C3 kinase activity. May act as a scaffold, independently of its lipid kinase activity to positively regulate autophagy. May have a role in insulin signaling as scaffolding protein in which the lipid kinase activity is not required. May have a kinase-independent function in regulating cell proliferation and in clathrin-mediated endocytosis. Mediator of oncogenic signal in cell lines lacking PTEN. The lipid kinase activity is necessary for its role in oncogenic transformation. Required for the growth of ERBB2 and RAS driven tumors. Also has a protein kinase activity showing autophosphorylation. The chain is Phosphatidylinositol 4,5-bisphosphate 3-kinase catalytic subunit beta isoform (Pik3cb) from Rattus norvegicus (Rat).